The following is a 450-amino-acid chain: MSMEFDAVIIGGGVSGCATFYTLSEYSSLKRVAIVEKCSKLAQISSSAKANSQTIHDGSIETNYTPEKAKKVRLSAYKTRQYALNKGLQNEVIFETQKMAIGVGDEECEFMKKRYESFKEIFVGLEEFDKQKIKELEPNVILGANGIDRHENIIGHGYRKDWSTMNFAKLSENFVEEALKLKPNNQVFLNFKVKKIEKRNDTYAVISEDAEEVYAKFVLVNAGSYALPLAQSMGYGLDLGCLPVAGSFYFVPDLLRGKVYTVQNPKLPFAAVHGDPDAVIKGKTRIGPTALTMPKLERNKCWLKGISLELLKMDLNRDVFKIAFDLMSDKEIRNYVFKNMVFELPIIGKRKFLKDAQKIIPTLSLEDLEYAHGFGEVRPQVLDRTKRKLELGEKKICTHKGITFNMTPSPGATSCLQNALVDSQEIAAYLGESFELERFYKDLSPEELEN.

The protein belongs to the MQO family. The cofactor is FAD.

The protein localises to the cell membrane. It catalyses the reaction (S)-malate + a quinone = a quinol + oxaloacetate. Its pathway is carbohydrate metabolism; tricarboxylic acid cycle; oxaloacetate from (S)-malate (quinone route): step 1/1. In terms of biological role, catalyzes oxidation of malate to oxaloacetate in the citric acid cycle. Donates electrons to quinones of the electron transfer chain. This chain is Malate:quinone oxidoreductase (mqo), found in Helicobacter pylori (strain J99 / ATCC 700824) (Campylobacter pylori J99).